Reading from the N-terminus, the 497-residue chain is Cytochrome P450 3A18 (497 aa).

Residue cysteine 442 participates in heme binding.

This sequence belongs to the cytochrome P450 family. Heme is required as a cofactor.

Its subcellular location is the endoplasmic reticulum membrane. The protein localises to the microsome membrane. It catalyses the reaction an organic molecule + reduced [NADPH--hemoprotein reductase] + O2 = an alcohol + oxidized [NADPH--hemoprotein reductase] + H2O + H(+). Functionally, catalyzes 16-beta- and 6-alpha-hydroxylations of testosterone. The polypeptide is Cytochrome P450 3A18 (Cyp3a18) (Rattus norvegicus (Rat)).